We begin with the raw amino-acid sequence, 421 residues long: Cytochrome c biogenesis protein Ccs1 (421 aa).

Helical transmembrane passes span 12 to 32 (LRFA…GTVI), 71 to 91 (TWWF…CTIL), and 157 to 177 (IAPI…IFGA).

The protein belongs to the Ccs1/CcsB family. May interact with CcsA.

The protein resides in the plastid. Its subcellular location is the chloroplast thylakoid membrane. Its function is as follows. Required during biogenesis of c-type cytochromes (cytochrome c6 and cytochrome f) at the step of heme attachment. This chain is Cytochrome c biogenesis protein Ccs1, found in Trieres chinensis (Marine centric diatom).